The chain runs to 161 residues: Zinc finger protein KNUCKLES (161 aa).

Residues 1–33 (MAEPPPSYLHFVGPAKTRSSSKRHSFSSSAHPA) form a disordered region. The C2H2-type zinc finger occupies 38-60 (FPCQYCPRKFYTSQALGGHQNAH). The tract at residues 142–161 (GGNGVMEEDEPLDLDLSLRL) is disordered. Positions 155–159 (LDLSL) match the EAR-like (transcriptional repression) motif.

First expressed in developing carpel primordia, and later in stamens and ovules of flower buds.

The protein localises to the nucleus. In terms of biological role, may function as a transcriptional repressor of cellular proliferation that regulates floral determinacy and relative size of basal pattern elements along the proximo-distal axis of the developing gynoecium. The chain is Zinc finger protein KNUCKLES (KNU) from Arabidopsis thaliana (Mouse-ear cress).